The chain runs to 982 residues: Pentatricopeptide repeat-containing protein At5g62370 (982 aa).

24 PPR repeats span residues 94 to 129 (DSSC…GIVP), 130 to 164 (DSSV…GYAP), 165 to 199 (SRNS…GSGL), 200 to 234 (WLWC…TRMP), 236 to 270 (PVNL…GYYV), 271 to 305 (DKVM…SFEL), 306 to 340 (DPCI…GVQS), 341 to 376 (NVFT…DISR), 377 to 411 (NVHC…GIVP), 412 to 446 (DHIT…GCGI), 476 to 510 (AAVG…GCTP), 511 to 545 (LPFS…DFVP), 546 to 580 (DVDT…GLRP), 581 to 615 (TVAI…GIQP), 616 to 650 (DEIA…FLRP), 651 to 685 (SSFT…GLSP), 686 to 720 (NVVL…DIKH), 721 to 755 (DHIA…KLLQ), 759 to 789 (RTKP…VKKS), 793 to 827 (NLYL…GIVP), 828 to 858 (NLVT…TNCE), 860 to 894 (DQVM…GINP), 895 to 929 (NKDS…DIWP), and 930 to 964 (RSIN…GRSL).

This sequence belongs to the PPR family. P subfamily.

The protein is Pentatricopeptide repeat-containing protein At5g62370 of Arabidopsis thaliana (Mouse-ear cress).